The primary structure comprises 513 residues: MAMEIDSRPGGLPGSSCNLGAAREHMQAVTRNYITHPRVTYRTVCSVNGPLVVLDRVKFAQYAEIVHFTLPDGTQRSGQVLEVAGTKAIVQVFEGTSGIDARKTTCEFTGDILRTPVSEDMLGRVFNGSGKPIDKGPVVMAEDFLDINGQPINPHSRIYPEEMIQTGISPIDVMNSIARGQKIPIFSAAGLPHNEIAAQICRQAGLVKKSKAVLDYHDDNFAIVFAAMGVNMETARFFKSDFEQNGTMGNVCLFLNLANDPTIERIITPRLALTTAEFLAYQCEKHVLVILTDMSSYAEALREVSAAREEVPGRRGFPGYMYTDLATIYERAGRVEGRGGSITQIPILTMPNDDITHPIPDLTGFITEGQIYVDRQLHNRQIYPPINVLPSLSRLMKSAIGEGMTRKDHGDVSNQLYACYAIGKDVQAMKAVVGEEALTSEDLLYLEFLQKFEKNFINQGPYENRSVFESLDLGWKLLRIFPKEMLKRIPQAVIDEFYSREGALQDLAPDTAL.

Arg-394 is a binding site for ATP. The PDZ-binding signature appears at 510 to 513 (DTAL).

Belongs to the ATPase alpha/beta chains family. V-ATPase is a heteromultimeric enzyme made up of two complexes: the ATP-hydrolytic V1 complex and the proton translocation V0 complex. The V1 complex consists of three catalytic AB heterodimers that form a heterohexamer, three peripheral stalks each consisting of EG heterodimers, one central rotor including subunits D and F, and the regulatory subunits C and H. The proton translocation complex V0 consists of the proton transport subunit a, a ring of proteolipid subunits c9c'', rotary subunit d, subunits e and f, and the accessory subunits ATP6AP1/Ac45 and ATP6AP2/PRR. Forms a complex with NHERF1 and SCL4A7. Kidney; localizes to early distal nephron, encompassing thick ascending limbs and distal convoluted tubules (at protein level). Expressed in the cochlea and endolymphatic sac.

The protein resides in the apical cell membrane. It is found in the basolateral cell membrane. Non-catalytic subunit of the V1 complex of vacuolar(H+)-ATPase (V-ATPase), a multisubunit enzyme composed of a peripheral complex (V1) that hydrolyzes ATP and a membrane integral complex (V0) that translocates protons. V-ATPase is responsible for acidifying and maintaining the pH of intracellular compartments and in some cell types, is targeted to the plasma membrane, where it is responsible for acidifying the extracellular environment. Essential for the proper assembly and activity of V-ATPase. In renal intercalated cells, mediates secretion of protons (H+) into the urine thereby ensuring correct urinary acidification. Required for optimal olfactory function by mediating the acidification of the nasal olfactory epithelium. The chain is V-type proton ATPase subunit B, kidney isoform (ATP6V1B1) from Homo sapiens (Human).